Consider the following 208-residue polypeptide: Large ribosomal subunit protein bL25 (208 aa).

Residues Leu-178–Glu-208 form a disordered region. The span at Pro-186–Lys-195 shows a compositional bias: acidic residues. Basic and acidic residues predominate over residues Glu-196–Glu-208.

Belongs to the bacterial ribosomal protein bL25 family. CTC subfamily. Part of the 50S ribosomal subunit; part of the 5S rRNA/L5/L18/L25 subcomplex. Contacts the 5S rRNA. Binds to the 5S rRNA independently of L5 and L18.

This is one of the proteins that binds to the 5S RNA in the ribosome where it forms part of the central protuberance. The chain is Large ribosomal subunit protein bL25 from Bacillus pumilus (strain SAFR-032).